The primary structure comprises 67 residues: Penaeidin-4d (67 aa).

A signal peptide spans 1–19 (MRLLVCLVFLASFAMVCQG). Disulfide bonds link cysteine 42–cysteine 56, cysteine 45–cysteine 63, and cysteine 57–cysteine 64. A Leucine amide modification is found at leucine 66.

The protein belongs to the penaeidin family.

The protein resides in the cytoplasmic granule. Functionally, antibacterial and antifungal activity. Presents chitin-binding activity. The chain is Penaeidin-4d from Penaeus setiferus (Atlantic white shrimp).